We begin with the raw amino-acid sequence, 37 residues long: Large ribosomal subunit protein bL36 (37 aa).

This sequence belongs to the bacterial ribosomal protein bL36 family.

The chain is Large ribosomal subunit protein bL36 from Paracidovorax citrulli (strain AAC00-1) (Acidovorax citrulli).